The primary structure comprises 635 residues: Glutamine sensor PIB2 (635 aa).

Residues 1 to 110 form a disordered region; the sequence is MTALHSVSKT…GTGFVDRKQQ (110 aa). Residues 1 to 164 are may play a role in attenuating TORC1 signaling; it reads MTALHSVSKT…KTLPFTDDQR (164 aa). Basic and acidic residues predominate over residues 33 to 44; that stretch reads RNHDYRGRKGDE. Phosphoserine occurs at positions 46 and 53. Position 56 is a phosphothreonine (threonine 56). A compositionally biased stretch (polar residues) spans 67–85; sequence STHSEQSILSSISLKSMVN. Phosphoserine is present on residues serine 73, serine 113, serine 124, serine 148, serine 165, and serine 174. Disordered regions lie at residues 123–181 and 224–254; these read NSAE…VSRG and SSNLRLSKENKAKESSSSSTSSVSSSSTSKV. A compositionally biased stretch (low complexity) spans 238 to 254; sequence SSSSSTSSVSSSSTSKV. 3 positions are modified to phosphoserine: serine 300, serine 309, and serine 381. The interval 304–440 is required for interaction with TORC1; sequence LPQPASSTNL…PTISNRNSAR (137 aa). The FYVE-type; atypical zinc finger occupies 452 to 527; that stretch reads DSKRNSCRYC…ICDDCLVEYE (76 aa). Zn(2+) is bound by residues cysteine 458, cysteine 461, cysteine 474, cysteine 477, cysteine 482, histidine 485, cysteine 519, and cysteine 522. Disordered stretches follow at residues 534 to 557 and 570 to 623; these read HNANTNEDNINVEEGEDDDNDNRK and ALFR…GSVI. Acidic residues-rich tracts occupy residues 543–553 and 601–616; these read INVEEGEDDDN and EEADNENTGGEQEEGN. Residues 620–635 are may be required for TORC1 activation; that stretch reads GSVIGSVPANWNWSSF.

In terms of assembly, interacts with the TORC1 complex when activated by glutamine or cysteine. Interacts with TOR1; glutamine enhances the interaction. Interacts with KOG1; glutamine enhances the interaction. Interacts with TCO89. Interacts with LST8; glutamine enhances the interaction. Interacts with TOR2; glutamine enhances the interaction.

Its subcellular location is the vacuole membrane. Activated by glutamine. May also be activated by cysteine. Functionally, functions as an intracellular glutamine sensor that directly activates the TORC1 signaling pathway, to promote cell growth when glutamine is available. May play a role in repressing NPR1 activity independently of TORC1 signaling. In Saccharomyces cerevisiae (strain ATCC 204508 / S288c) (Baker's yeast), this protein is Glutamine sensor PIB2.